A 292-amino-acid chain; its full sequence is Short chain dehydrogenase/reductase CPUR_05418 (292 aa).

Residues Ile44 and Arg156 each coordinate NADP(+). Residues Ser172 and Tyr186 each act as proton donor in the active site. Residues Tyr186, Lys190, Ile221, and Thr223 each contribute to the NADP(+) site. The Lowers pKa of active site Tyr role is filled by Lys190.

This sequence belongs to the short-chain dehydrogenases/reductases (SDR) family.

Its pathway is secondary metabolite biosynthesis. In terms of biological role, short chain dehydrogenase/reductase; part of the ergochrome gene cluster responsible for the typical purple-black color of the ergot sclerotia. The ergochrome gene cluster produces several ergot pigments including the yellow ergochrome secalonic acid and its derivatives, as well as the red anthraquinones endocrocin and clavorubin. The pathway begins with the synthesis of atrochrysone thioester by the polyketide synthase (PKS) CPUR_05437. The atrochrysone carboxyl ACP thioesterase CPUR_05436 then breaks the thioester bond and releases the atrochrysone carboxylic acid from CPUR_05437. The atrochrysone carboxylic acid is then converted to atrochrysone which is further transformed into emodin anthrone. The next step is performed by the anthrone oxygenase CPUR_05434 that catalyzes the oxidation of emodinanthrone to emodin. Emodin is further modified to yield monodictyphenone via several steps involving CPUR_05427, CPUR_05428, CPUR_05429 and CPUR_05430. The short chain dehydrogenase/reductase CPUR_05418 then catalyzes the C-5 ketoreduction to give the xanthone skeleton of the monomeric units. Ergochromes formation requires further dimerization steps of different xanthone units, probably catalyzed by the cytochrome P450 monooxygenase CPUR_05419. CPUR_05425, CPUR_05426 and CPUR_05431 are unique to Claviceps, thus it is likely that they are involved in further modification of xanthone units or in their dimerization. The yellow ergochromes and the red anthraquinone pigments endocrocin and clavorubin are products from the same PKS derived precursors and the latter are likely shunt products in the pathway of xanthone biosynthesis. It is proposed that atrochrysone carboxylic acid released from the PKS CPUR_05437 can also be converted to endocrocin anthrone which is further oxidized into endocrocin by CPUR_05435. Endocrocin could be then modified to clavorubin, possibly by CPUR_05423 and CPUR_05431. Clavorubin is the principal anthraquinone metabolite produced by the cluster with a much higher yield compared to endocrocin. The sequence is that of Short chain dehydrogenase/reductase CPUR_05418 from Claviceps purpurea (strain 20.1) (Ergot fungus).